The chain runs to 542 residues: Esterase S (542 aa).

The N-terminal stretch at 1-22 is a signal peptide; the sequence is MTQILLPIALLCLFAASTLSNP. A disulfide bond links cysteine 81 and cysteine 100. Asparagine 110 is a glycosylation site (N-linked (GlcNAc...) asparagine). The active-site Acyl-ester intermediate is the serine 204. A disulfide bond links cysteine 256 and cysteine 268. Residue asparagine 396 is glycosylated (N-linked (GlcNAc...) asparagine). A disulfide bond links cysteine 507 and cysteine 528.

Belongs to the type-B carboxylesterase/lipase family. As to quaternary structure, monomer. As to expression, specifically expressed in the ejaculatory bulbs of male.

The protein resides in the secreted. The enzyme catalyses a carboxylic ester + H2O = an alcohol + a carboxylate + H(+). Its function is as follows. Transferred from the ejaculatory bulbs of males to the female genitals upon copulation, plays an important role in the reproductive biology. This Drosophila virilis (Fruit fly) protein is Esterase S (EstS).